Reading from the N-terminus, the 477-residue chain is Methylenetetrahydrofolate--tRNA-(uracil-5-)-methyltransferase TrmFO (477 aa).

14-19 (GGGLAG) is an FAD binding site.

It belongs to the MnmG family. TrmFO subfamily. Requires FAD as cofactor.

It is found in the cytoplasm. It catalyses the reaction uridine(54) in tRNA + (6R)-5,10-methylene-5,6,7,8-tetrahydrofolate + NADH + H(+) = 5-methyluridine(54) in tRNA + (6S)-5,6,7,8-tetrahydrofolate + NAD(+). The enzyme catalyses uridine(54) in tRNA + (6R)-5,10-methylene-5,6,7,8-tetrahydrofolate + NADPH + H(+) = 5-methyluridine(54) in tRNA + (6S)-5,6,7,8-tetrahydrofolate + NADP(+). Its function is as follows. Catalyzes the folate-dependent formation of 5-methyl-uridine at position 54 (M-5-U54) in all tRNAs. The sequence is that of Methylenetetrahydrofolate--tRNA-(uracil-5-)-methyltransferase TrmFO from Rhizobium etli (strain ATCC 51251 / DSM 11541 / JCM 21823 / NBRC 15573 / CFN 42).